The primary structure comprises 466 residues: 3-isopropylmalate dehydratase large subunit (466 aa).

[4Fe-4S] cluster is bound by residues C347, C407, and C410.

Belongs to the aconitase/IPM isomerase family. LeuC type 1 subfamily. As to quaternary structure, heterodimer of LeuC and LeuD. [4Fe-4S] cluster serves as cofactor.

The enzyme catalyses (2R,3S)-3-isopropylmalate = (2S)-2-isopropylmalate. It participates in amino-acid biosynthesis; L-leucine biosynthesis; L-leucine from 3-methyl-2-oxobutanoate: step 2/4. Its function is as follows. Catalyzes the isomerization between 2-isopropylmalate and 3-isopropylmalate, via the formation of 2-isopropylmaleate. The protein is 3-isopropylmalate dehydratase large subunit of Vibrio vulnificus (strain CMCP6).